The following is a 455-amino-acid chain: Pup--protein ligase (455 aa).

Glu-10 provides a ligand contact to Mg(2+). Arg-55 contacts ATP. Residue Tyr-57 coordinates Mg(2+). Asp-59 functions as the Proton acceptor in the catalytic mechanism. Mg(2+) is bound at residue Glu-65. Residues Thr-68 and Trp-422 each coordinate ATP.

It belongs to the Pup ligase/Pup deamidase family. Pup-conjugating enzyme subfamily.

The enzyme catalyses ATP + [prokaryotic ubiquitin-like protein]-L-glutamate + [protein]-L-lysine = ADP + phosphate + N(6)-([prokaryotic ubiquitin-like protein]-gamma-L-glutamyl)-[protein]-L-lysine.. It functions in the pathway protein degradation; proteasomal Pup-dependent pathway. The protein operates within protein modification; protein pupylation. In terms of biological role, catalyzes the covalent attachment of the prokaryotic ubiquitin-like protein modifier Pup to the proteasomal substrate proteins, thereby targeting them for proteasomal degradation. This tagging system is termed pupylation. The ligation reaction involves the side-chain carboxylate of the C-terminal glutamate of Pup and the side-chain amino group of a substrate lysine. The polypeptide is Pup--protein ligase (Sanguibacter keddieii (strain ATCC 51767 / DSM 10542 / NCFB 3025 / ST-74)).